Here is a 166-residue protein sequence, read N- to C-terminus: Small ribosomal subunit protein bS6 (166 aa).

The interval 97–166 is disordered; it reads EEGPSAMMRK…EEAETATDGE (70 aa). Over residues 105-159 the composition is skewed to basic and acidic residues; sequence RKADRDRERDDRGGGFRGEREGGFRGDREGGFRGGDRDGGGFRGDRGPRRPREEA.

The protein belongs to the bacterial ribosomal protein bS6 family.

Functionally, binds together with bS18 to 16S ribosomal RNA. In Bradyrhizobium diazoefficiens (strain JCM 10833 / BCRC 13528 / IAM 13628 / NBRC 14792 / USDA 110), this protein is Small ribosomal subunit protein bS6.